Here is a 1493-residue protein sequence, read N- to C-terminus: ABC transporter C family member 7 (1493 aa).

10 helical membrane passes run 21–41, 70–90, 102–122, 140–160, 165–185, 309–329, 343–360, 423–443, 448–468, and 535–555; these read FPMF…GSCV, VVIC…LSCF, LMIL…SFYI, VWWV…IALY, LVSV…LFLC, ILLS…APYL, YSNQ…AKLV, WYMH…LILY, LGSI…IPLA, and SVLW…CMLL. Residues 309–590 enclose the ABC transmembrane type-1 1 domain; the sequence is ILLSTLFAFV…LPDTISMIVQ (282 aa). An ABC transporter 1 domain is found at 624–847; the sequence is VEVSNGAFSW…GTDFMELVGA (224 aa). 659–666 is a binding site for ATP; the sequence is GTVGSGKS. A disordered region spans residues 863–898; the sequence is ASAQSTTSKESKVSNDEEKQEEDLPSPKGQLVQEEE. A Phosphoserine modification is found at Ser888. Transmembrane regions (helical) follow at residues 915–935, 959–979, 1038–1055, 1059–1081, 1153–1173, and 1177–1197; these read LAYG…FQVL, GSTL…CILV, FSNL…IGVM, AWQV…QYYI, LSTV…EGVI, and FAGL…TLIW. The region spanning 922-1204 is the ABC transmembrane type-1 2 domain; the sequence is VPIILVVQIL…LIWTLCDLEN (283 aa). The 235-residue stretch at 1241 to 1475 folds into the ABC transporter 2 domain; sequence ITICNLQVRY…KSSSFSKLVA (235 aa). 1275 to 1282 is a binding site for ATP; it reads GRTGCGKS.

It belongs to the ABC transporter superfamily. ABCC family. Conjugate transporter (TC 3.A.1.208) subfamily. As to expression, ubiquitous.

It localises to the membrane. The enzyme catalyses ATP + H2O + xenobioticSide 1 = ADP + phosphate + xenobioticSide 2.. Functionally, pump for glutathione S-conjugates. This chain is ABC transporter C family member 7 (ABCC7), found in Arabidopsis thaliana (Mouse-ear cress).